The chain runs to 251 residues: Zwei Ig domain protein zig-3 (251 aa).

An N-terminal signal peptide occupies residues 1–19; it reads MLLICISVLAAISAHPLSS. Ig-like C2-type domains follow at residues 42 to 144 and 160 to 244; these read PSLK…AKIS and PVIT…TFLY. 2 disulfide bridges follow: C65–C128 and C181–C228.

As to expression, expressed in PVT, AIM and ASI neurons, in vulva and weakly in body wall muscles.

It is found in the secreted. Its function is as follows. Required for maintaining axon position of PVQ and PVP neurons postembryonically in the ventral nerve cord (VNC) by preventing axons drifting into the opposite side of the VNC that could occur during body growth and movement. The chain is Zwei Ig domain protein zig-3 from Caenorhabditis elegans.